The sequence spans 459 residues: MLKLLLPMIMLLPTSWLCKKNHLSYTTLLFSFTIALLSLQWLKPPFELTTTFSNTYMGVDPISTPLLILTSWMTPLMILVSKNHLIQEPLSRKRTFTTTIISLQISLTLAFSALEMMLFFTMFEATLIPTLIIITRWGNQMERLSAGTYFLFYTLIGSLPLLIALTSLHTNYNTLSLFILQLNPPNLTNSWAHTMWWFALLMAFMIKMPLYGLHLWLPKAHVEAPIAGSMILAGVLLKLGGYGIIRVTLMLNPLTKSLSYPFMTLSLWGIIMTGLICLRQTDLKSLIAYSSVGLMGLVISAALLQTPLSITGAIILMIAHGLSSSMLFCLANTNYERTHNRTLLLTHSMQTLLPLMTIWWLLASLMNMALPPTINLMGELTIIASLFSWANITIILTGLGTLISALYSLHMFSTTQWGGTPPHHMHTITPSHTREHLIMMLHMVPLILLMMKPQLMTTF.

The next 13 membrane-spanning stretches (helical) occupy residues 22–42 (HLSY…LQWL), 61–81 (PIST…ILVS), 94–113 (RTFT…AFSA), 114–134 (LEMM…LIII), 146–166 (AGTY…IALT), 197–217 (WFAL…HLWL), 225–245 (PIAG…YGII), 258–278 (LSYP…LICL), 285–304 (SLIA…AALL), 308–330 (LSIT…LFCL), 352–372 (LLPL…ALPP), 380–400 (LTII…TGLG), and 437–457 (LIMM…QLMT).

It belongs to the complex I subunit 4 family.

It is found in the mitochondrion membrane. It carries out the reaction a ubiquinone + NADH + 5 H(+)(in) = a ubiquinol + NAD(+) + 4 H(+)(out). Functionally, core subunit of the mitochondrial membrane respiratory chain NADH dehydrogenase (Complex I) that is believed to belong to the minimal assembly required for catalysis. Complex I functions in the transfer of electrons from NADH to the respiratory chain. The immediate electron acceptor for the enzyme is believed to be ubiquinone. This chain is NADH-ubiquinone oxidoreductase chain 4 (MT-ND4), found in Pelomedusa subrufa (African side-necked turtle).